The following is a 289-amino-acid chain: Syntaxin-3 (289 aa).

The Cytoplasmic segment spans residues 1–263 (MKDRLEQLKA…MKYQGQARKK (263 aa)). Positions 32 to 111 (MDEFFSEIEE…IEEDEVRSSA (80 aa)) form a coiled coil. The t-SNARE coiled-coil homology domain occupies 191 to 253 (LSEIEGRHKD…EKARDETKRA (63 aa)). The helical; Anchor for type IV membrane protein transmembrane segment at 264 to 284 (LIIIIVIVVVLLGILALIIGL) threads the bilayer. Over 285-289 (SVGLK) the chain is Extracellular.

It belongs to the syntaxin family. Interacts with REEP6. Interacts with PRPH2 in rod and cone photoreceptors. Interacts with ROM1. Interacts with SNAP25. Interacts with VAMP2. As to expression, heart, spleen, lung and kidney.

Its subcellular location is the membrane. Potentially involved in docking of synaptic vesicles at presynaptic active zones. Apical receptor involved in membrane fusion of apical vesicles. Essential for survival of retinal photoreceetors. This is Syntaxin-3 (Stx3) from Rattus norvegicus (Rat).